A 468-amino-acid chain; its full sequence is 3-isopropylmalate dehydratase large subunit (468 aa).

The [4Fe-4S] cluster site is built by Cys-346, Cys-406, and Cys-409.

Belongs to the aconitase/IPM isomerase family. LeuC type 1 subfamily. Heterodimer of LeuC and LeuD. Requires [4Fe-4S] cluster as cofactor.

The enzyme catalyses (2R,3S)-3-isopropylmalate = (2S)-2-isopropylmalate. Its pathway is amino-acid biosynthesis; L-leucine biosynthesis; L-leucine from 3-methyl-2-oxobutanoate: step 2/4. Its function is as follows. Catalyzes the isomerization between 2-isopropylmalate and 3-isopropylmalate, via the formation of 2-isopropylmaleate. This Pseudoalteromonas atlantica (strain T6c / ATCC BAA-1087) protein is 3-isopropylmalate dehydratase large subunit.